A 1007-amino-acid chain; its full sequence is SUPPRESSOR OF ABI3-5 (1007 aa).

Disordered stretches follow at residues 1-185 (MDPS…RDRE) and 204-269 (ESPH…FSAT). Basic and acidic residues-rich tracts occupy residues 40 to 49 (PDERLMRDDV), 94 to 120 (YYHD…RYDG), 138 to 185 (HSRD…RDRE), and 204 to 214 (ESPHKRYEKSR). Residues 227–236 (RSPRGRSHGR) show a composition bias toward basic residues. Over residues 237–264 (SYREDSYEGDHWNESERRREYEDRHNQD) the composition is skewed to basic and acidic residues. In terms of domain architecture, RRM 1 spans 272 to 352 (ATVVVKGLSM…RKLMFHYSQP (81 aa)). The RanBP2-type zinc finger occupies 378–407 (VPTDWICTICGCINFARRTSCFQCNEPKTK). Residues 432–512 (HVLVVRGLDE…KILRVAYAKS (81 aa)) form the RRM 2 domain. 6 disordered regions span residues 556 to 581 (GEKQ…SAPQ), 631 to 656 (PDQN…SQQK), 725 to 755 (HETQ…STGQ), 771 to 797 (STSN…TLMG), 810 to 910 (ASSS…GITT), and 945 to 977 (SGLG…KKVD). Residues 631–645 (PDQNNESKVTENQPD) are compositionally biased toward polar residues. 2 stretches are compositionally biased toward low complexity: residues 778-793 (SALT…TTGG) and 823-835 (PSAS…VSGS). Residues 849-867 (THREQPQTSYRDRAAERRN) are compositionally biased toward basic and acidic residues. Residues 928–974 (ESNVGNRMLRNMGWHEGSGLGKDGSGMKEPVQAQGVDRRAGLGSQQK) enclose the G-patch domain.

Interacts with the pre-spliceosomal component U2AF65A. As to expression, ubiquitous with highest expression in siliques toward the end of seed maturation.

The protein resides in the nucleus. Splicing factor that controls alternative splicing of the developmental regulator ABI3. Reduces splicing of a cryptic intron in ABI3, leading to a decreased in ABI3-beta transcript. Regulates the splicing of the receptor-like kinase SNC4/LRKL-2.6. The polypeptide is SUPPRESSOR OF ABI3-5 (Arabidopsis thaliana (Mouse-ear cress)).